We begin with the raw amino-acid sequence, 213 residues long: Large ribosomal subunit protein uL3 (213 aa).

A disordered region spans residues Gly-131–Arg-155. The segment covering His-135–Asp-152 has biased composition (polar residues). N5-methylglutamine is present on Gln-151.

The protein belongs to the universal ribosomal protein uL3 family. Part of the 50S ribosomal subunit. Forms a cluster with proteins L14 and L19. In terms of processing, methylated by PrmB.

One of the primary rRNA binding proteins, it binds directly near the 3'-end of the 23S rRNA, where it nucleates assembly of the 50S subunit. This is Large ribosomal subunit protein uL3 from Agrobacterium fabrum (strain C58 / ATCC 33970) (Agrobacterium tumefaciens (strain C58)).